Reading from the N-terminus, the 237-residue chain is MAMPSLSACSSIEDDFNYGSSVASASVHIRMAFLRKVYGILCLQFLLTTATTAVFLYFDCMRTFIQGSPVLILASMFGSIGLIFALTLHRHKHPLNLYLLCGFTLSESLTLASVVTFYDVHVVMQAFMLTTAAFLALTTYTLQSKRDFSKLGAGLFAALWILILSGLLGIFVQNETVKLVLSAFGALVFCGFIIYDTHSLIHKLSPEEYVLASINLYLDIINLFLHLLQLLEVSNKK.

The Cytoplasmic segment spans residues 1–37 (MAMPSLSACSSIEDDFNYGSSVASASVHIRMAFLRKV). The helical transmembrane segment at 38–58 (YGILCLQFLLTTATTAVFLYF) threads the bilayer. Over 59–67 (DCMRTFIQG) the chain is Lumenal. The helical transmembrane segment at 68–88 (SPVLILASMFGSIGLIFALTL) threads the bilayer. At 89 to 94 (HRHKHP) the chain is on the cytoplasmic side. Residues 95-115 (LNLYLLCGFTLSESLTLASVV) form a helical membrane-spanning segment. Thr116 is a topological domain (lumenal). The helical transmembrane segment at 117 to 137 (FYDVHVVMQAFMLTTAAFLAL) threads the bilayer. The Cytoplasmic portion of the chain corresponds to 138–151 (TTYTLQSKRDFSKL). A helical transmembrane segment spans residues 152–172 (GAGLFAALWILILSGLLGIFV). The Lumenal segment spans residues 173–174 (QN). Residues 175–195 (ETVKLVLSAFGALVFCGFIIY) traverse the membrane as a helical segment. Residues 196–209 (DTHSLIHKLSPEEY) are Cytoplasmic-facing. The segment at residues 210–230 (VLASINLYLDIINLFLHLLQL) is an intramembrane region (helical). Over 231-237 (LEVSNKK) the chain is Cytoplasmic.

It belongs to the BI1 family. LFG subfamily.

The protein resides in the host Golgi apparatus membrane. Functionally, may affect virulence through inhibition of apoptosis. The protein is Golgi anti-apoptotic protein (L6) of Vaccinia virus (strain LC16m0) (VACV).